Here is a 518-residue protein sequence, read N- to C-terminus: Flagellin (518 aa).

It belongs to the bacterial flagellin family.

The protein localises to the secreted. The protein resides in the bacterial flagellum. Functionally, flagellin is the subunit protein which polymerizes to form the filaments of bacterial flagella. In Aquifex aeolicus (strain VF5), this protein is Flagellin (flaA).